Consider the following 363-residue polypeptide: Phosphoserine aminotransferase (363 aa).

Position 46 (Arg46) interacts with L-glutamate. Pyridoxal 5'-phosphate contacts are provided by residues 80–81, Trp106, Thr156, Asp176, and Gln199; that span reads AT. Lys200 carries the post-translational modification N6-(pyridoxal phosphate)lysine. 241 to 242 is a binding site for pyridoxal 5'-phosphate; it reads NT.

The protein belongs to the class-V pyridoxal-phosphate-dependent aminotransferase family. SerC subfamily. As to quaternary structure, homodimer. The cofactor is pyridoxal 5'-phosphate.

It localises to the cytoplasm. It catalyses the reaction O-phospho-L-serine + 2-oxoglutarate = 3-phosphooxypyruvate + L-glutamate. The enzyme catalyses 4-(phosphooxy)-L-threonine + 2-oxoglutarate = (R)-3-hydroxy-2-oxo-4-phosphooxybutanoate + L-glutamate. The protein operates within amino-acid biosynthesis; L-serine biosynthesis; L-serine from 3-phospho-D-glycerate: step 2/3. It participates in cofactor biosynthesis; pyridoxine 5'-phosphate biosynthesis; pyridoxine 5'-phosphate from D-erythrose 4-phosphate: step 3/5. In terms of biological role, catalyzes the reversible conversion of 3-phosphohydroxypyruvate to phosphoserine and of 3-hydroxy-2-oxo-4-phosphonooxybutanoate to phosphohydroxythreonine. This is Phosphoserine aminotransferase from Leptospira interrogans serogroup Icterohaemorrhagiae serovar copenhageni (strain Fiocruz L1-130).